The chain runs to 21 residues: Dahlein-5.2 (21 aa).

In terms of tissue distribution, expressed by the skin dorsal glands.

The protein resides in the secreted. Functionally, has no antimicrobial activity. Strongly inhibits the formation of NO by neuronal nitric oxide synthase at micromolar concentrations. This is Dahlein-5.2 from Ranoidea dahlii (Dahl's aquatic frog).